We begin with the raw amino-acid sequence, 842 residues long: Glucans biosynthesis glucosyltransferase H (842 aa).

A run of 7 helical transmembrane segments spans residues 140 to 160 (ILLL…KTIL), 194 to 214 (ILIL…TALM), 513 to 533 (VFLT…FLAL), 570 to 590 (LFAS…MLIW), 615 to 635 (VLLA…AFLG), 656 to 676 (FMRH…MAWL), and 680 to 700 (FLFW…VSVV).

This sequence belongs to the glycosyltransferase 2 family. OpgH subfamily.

It localises to the cell inner membrane. The protein operates within glycan metabolism; osmoregulated periplasmic glucan (OPG) biosynthesis. Its function is as follows. Involved in the biosynthesis of osmoregulated periplasmic glucans (OPGs). In Citrobacter koseri (strain ATCC BAA-895 / CDC 4225-83 / SGSC4696), this protein is Glucans biosynthesis glucosyltransferase H.